Here is a 97-residue protein sequence, read N- to C-terminus: Cobalt transport protein CbiN (97 aa).

2 consecutive transmembrane segments (helical) span residues 6-26 (VLMILGVIILILAPLIMYSGL) and 68-88 (SLLFALQAAIGAIIIGYFFGY).

The protein belongs to the CbiN family. As to quaternary structure, forms an energy-coupling factor (ECF) transporter complex composed of an ATP-binding protein (A component, CbiO), a transmembrane protein (T component, CbiQ) and 2 possible substrate-capture proteins (S components, CbiM and CbiN) of unknown stoichimetry.

The protein localises to the cell membrane. It functions in the pathway cofactor biosynthesis; adenosylcobalamin biosynthesis. Its function is as follows. Part of the energy-coupling factor (ECF) transporter complex CbiMNOQ involved in cobalt import. The chain is Cobalt transport protein CbiN from Methanococcus maripaludis (strain C5 / ATCC BAA-1333).